Reading from the N-terminus, the 276-residue chain is Beta-lactamase OXA-1 (276 aa).

An N-terminal signal peptide occupies residues 1 to 25; it reads MKNTIHINFAIFLIIANIIYSSASA. Catalysis depends on Ser-71, which acts as the Acyl-ester intermediate. A beta-lactam contacts are provided by Ser-71, Lys-74, Ser-118, Thr-216, and Ala-218. At Lys-74 the chain carries N6-carboxylysine.

The protein belongs to the class-D beta-lactamase family. Monomer.

The protein localises to the periplasm. It carries out the reaction a beta-lactam + H2O = a substituted beta-amino acid. Inhibited by penicillin sulfones. Only weakly inhibited by clavulanic acid and sulbactam. Class D beta-lactamase which confers resistance to the beta-lactam antibiotics, including amoxicillin and ticarcillin. Acts via hydrolysis of the beta-lactam ring. Has penicillin- and cephalosporin-hydrolyzing activities. This is Beta-lactamase OXA-1 from Escherichia coli.